Reading from the N-terminus, the 286-residue chain is MSATDLASLEKTIEAAFDNRDNVNMSTKGEVRDAVEAALNLLDEGKARVAERGADGVWTVNQWLKKAVLLSFRLNDMQVVKGGSGNSTWWDKVPSKFENWGENQFRASGFRAVPNCVVRRSAYIAPNAILMPSFVNLGAYVGEGTMVDTWATVGSCAQIGKHVHLSGGVGIGGVLEPMQAGPTIIEDNCFIGARSEVVEGCIIREGSVLGMGVYIGKSTKIVDRATGEVMYGEVPPYSVVVAGSMASANATMANGLPAPHLYCAVIVKRVDEQTRSKTGINELLRD.

R111 and D148 together coordinate substrate.

It belongs to the transferase hexapeptide repeat family. Homotrimer.

It localises to the cytoplasm. The enzyme catalyses (S)-2,3,4,5-tetrahydrodipicolinate + succinyl-CoA + H2O = (S)-2-succinylamino-6-oxoheptanedioate + CoA. Its pathway is amino-acid biosynthesis; L-lysine biosynthesis via DAP pathway; LL-2,6-diaminopimelate from (S)-tetrahydrodipicolinate (succinylase route): step 1/3. This is 2,3,4,5-tetrahydropyridine-2,6-dicarboxylate N-succinyltransferase from Rhizobium etli (strain ATCC 51251 / DSM 11541 / JCM 21823 / NBRC 15573 / CFN 42).